A 280-amino-acid polypeptide reads, in one-letter code: Large ribosomal subunit protein uL2 (280 aa).

Disordered stretches follow at residues 27 to 58 (STPE…GGGH) and 226 to 280 (MNPV…KHGR). Composition is skewed to basic residues over residues 37 to 58 (LHGH…GGGH) and 268 to 280 (IVRR…KHGR).

It belongs to the universal ribosomal protein uL2 family. As to quaternary structure, part of the 50S ribosomal subunit. Forms a bridge to the 30S subunit in the 70S ribosome.

One of the primary rRNA binding proteins. Required for association of the 30S and 50S subunits to form the 70S ribosome, for tRNA binding and peptide bond formation. It has been suggested to have peptidyltransferase activity; this is somewhat controversial. Makes several contacts with the 16S rRNA in the 70S ribosome. The chain is Large ribosomal subunit protein uL2 from Mycobacterium marinum (strain ATCC BAA-535 / M).